A 552-amino-acid polypeptide reads, in one-letter code: Phosphoglucomutase (552 aa).

The active-site Phosphoserine intermediate is the Ser143. Ser143, Asp295, Asp297, and Asp299 together coordinate Mg(2+).

Belongs to the phosphohexose mutase family. Mg(2+) serves as cofactor.

It catalyses the reaction alpha-D-glucose 1-phosphate = alpha-D-glucose 6-phosphate. It functions in the pathway glycolipid metabolism; diglucosyl-diacylglycerol biosynthesis. In terms of biological role, catalyzes the interconversion between glucose-6-phosphate and alpha-glucose-1-phosphate. This is the first step in the biosynthesis of diglucosyl-diacylglycerol (Glc2-DAG), i.e. the predominant glycolipid found in the S.aureus membrane, which is also used as a membrane anchor for lipoteichoic acid (LTA). The protein is Phosphoglucomutase (pgcA) of Staphylococcus aureus (strain USA300).